A 76-amino-acid chain; its full sequence is Sec-independent protein translocase protein TatA (76 aa).

The helical transmembrane segment at 1–21 (MGGLSIWHWLIVLLIVALVFG) threads the bilayer. Residues 43–76 (MKDGDAPADAQQLPRSGTVDVNAKEATRSDSNKA) are disordered. Over residues 64–76 (NAKEATRSDSNKA) the composition is skewed to basic and acidic residues.

This sequence belongs to the TatA/E family. As to quaternary structure, the Tat system comprises two distinct complexes: a TatABC complex, containing multiple copies of TatA, TatB and TatC subunits, and a separate TatA complex, containing only TatA subunits. Substrates initially bind to the TatABC complex, which probably triggers association of the separate TatA complex to form the active translocon.

It localises to the cell inner membrane. In terms of biological role, part of the twin-arginine translocation (Tat) system that transports large folded proteins containing a characteristic twin-arginine motif in their signal peptide across membranes. TatA could form the protein-conducting channel of the Tat system. This is Sec-independent protein translocase protein TatA from Burkholderia multivorans (strain ATCC 17616 / 249).